A 452-amino-acid chain; its full sequence is tRNA-2-methylthio-N(6)-dimethylallyladenosine synthase (452 aa).

The region spanning R5–A121 is the MTTase N-terminal domain. The [4Fe-4S] cluster site is built by C14, C50, C84, C156, C160, and C163. Residues R142 to D379 form the Radical SAM core domain. In terms of domain architecture, TRAM spans Q382–S446.

It belongs to the methylthiotransferase family. MiaB subfamily. Monomer. It depends on [4Fe-4S] cluster as a cofactor.

It localises to the cytoplasm. The catalysed reaction is N(6)-dimethylallyladenosine(37) in tRNA + (sulfur carrier)-SH + AH2 + 2 S-adenosyl-L-methionine = 2-methylsulfanyl-N(6)-dimethylallyladenosine(37) in tRNA + (sulfur carrier)-H + 5'-deoxyadenosine + L-methionine + A + S-adenosyl-L-homocysteine + 2 H(+). Its function is as follows. Catalyzes the methylthiolation of N6-(dimethylallyl)adenosine (i(6)A), leading to the formation of 2-methylthio-N6-(dimethylallyl)adenosine (ms(2)i(6)A) at position 37 in tRNAs that read codons beginning with uridine. The polypeptide is tRNA-2-methylthio-N(6)-dimethylallyladenosine synthase (Synechococcus elongatus (strain ATCC 33912 / PCC 7942 / FACHB-805) (Anacystis nidulans R2)).